Reading from the N-terminus, the 238-residue chain is MASSCQNVEIPGKPTETGTALLETATGTIQGFAPLSQIHQHLCAFHFYADDMGRQVEAHHFCAHLNEDVRQCLIFDGPGAGARLIGVEYIVSETVFLTLPDAEKPLWHTHEFEVKGGVLFMPGVPGVVERRDLEKVCKTYGKTIHFWQVDRGDALPLGLPQIMMVLTREGQLRQDLADCVEKKFGVSFQKERENRAYMSGPEHGIHPLANATGKGLRTEIREVDLPASTTAGAGRVFT.

This sequence belongs to the OBAP family. In terms of tissue distribution, expressed in seeds, but not in leaves or roots. Highest expression in scutellum. Detected in embryo axis and endosperm.

It is found in the lipid droplet. The protein is Oil body-associated protein 1A of Zea mays (Maize).